The chain runs to 366 residues: Carbamoyl phosphate synthase small chain (366 aa).

A CPSase region spans residues 1 to 171 (MLEKRYLVLE…KTPYVSTGSD (171 aa)). The L-glutamine site is built by Ser-47, Gly-221, and Gly-223. In terms of domain architecture, Glutamine amidotransferase type-1 spans 173 to 360 (SVVLLDFGKK…IAMMKDFKEK (188 aa)). Catalysis depends on Cys-248, which acts as the Nucleophile. Residues Leu-249, Gln-252, Asn-290, Gly-292, and Tyr-293 each contribute to the L-glutamine site. Active-site residues include His-333 and Glu-335.

The protein belongs to the CarA family. As to quaternary structure, composed of two chains; the small (or glutamine) chain promotes the hydrolysis of glutamine to ammonia, which is used by the large (or ammonia) chain to synthesize carbamoyl phosphate. Tetramer of heterodimers (alpha,beta)4.

It catalyses the reaction hydrogencarbonate + L-glutamine + 2 ATP + H2O = carbamoyl phosphate + L-glutamate + 2 ADP + phosphate + 2 H(+). The enzyme catalyses L-glutamine + H2O = L-glutamate + NH4(+). It functions in the pathway amino-acid biosynthesis; L-arginine biosynthesis; carbamoyl phosphate from bicarbonate: step 1/1. The protein operates within pyrimidine metabolism; UMP biosynthesis via de novo pathway; (S)-dihydroorotate from bicarbonate: step 1/3. Functionally, small subunit of the glutamine-dependent carbamoyl phosphate synthetase (CPSase). CPSase catalyzes the formation of carbamoyl phosphate from the ammonia moiety of glutamine, carbonate, and phosphate donated by ATP, constituting the first step of 2 biosynthetic pathways, one leading to arginine and/or urea and the other to pyrimidine nucleotides. The small subunit (glutamine amidotransferase) binds and cleaves glutamine to supply the large subunit with the substrate ammonia. This chain is Carbamoyl phosphate synthase small chain, found in Staphylococcus epidermidis (strain ATCC 12228 / FDA PCI 1200).